Reading from the N-terminus, the 395-residue chain is Oxalate oxidoreductase subunit alpha (395 aa).

In terms of assembly, dimer of heterotrimer of one alpha, one beta and one delta subunit.

The catalysed reaction is oxidized 2[4Fe-4S]-[ferredoxin] + oxalate = reduced 2[4Fe-4S]-[ferredoxin] + 2 CO2. In terms of biological role, catalyzes the anaerobic oxidation of oxalate using a broad range of electron acceptors, including ferredoxin and the nickel-dependent carbon monoxide dehydrogenase. Does not require coenzyme A as cosubstrate. Enables anaerobic growth on oxalate which is used as energy source by the bacteria. In Moorella thermoacetica (strain ATCC 39073 / JCM 9320), this protein is Oxalate oxidoreductase subunit alpha.